The chain runs to 450 residues: Phosphoglucosamine mutase (450 aa).

S101 acts as the Phosphoserine intermediate in catalysis. Mg(2+)-binding residues include S101, D240, D242, and D244. Position 101 is a phosphoserine (S101).

It belongs to the phosphohexose mutase family. It depends on Mg(2+) as a cofactor. Activated by phosphorylation.

It carries out the reaction alpha-D-glucosamine 1-phosphate = D-glucosamine 6-phosphate. Functionally, catalyzes the conversion of glucosamine-6-phosphate to glucosamine-1-phosphate. The polypeptide is Phosphoglucosamine mutase (Streptococcus equi subsp. zooepidemicus (strain H70)).